Consider the following 239-residue polypeptide: Probable transcriptional regulatory protein BBR47_14810 (239 aa).

It belongs to the TACO1 family. YeeN subfamily.

It is found in the cytoplasm. This is Probable transcriptional regulatory protein BBR47_14810 from Brevibacillus brevis (strain 47 / JCM 6285 / NBRC 100599).